The chain runs to 1167 residues: RNA-directed RNA polymerase (1167 aa).

Residues 553–735 (LTYGILAEAT…KALASYTGLE (183 aa)) form the RdRp catalytic domain.

Belongs to the reoviridae RNA-directed RNA polymerase family. As to quaternary structure, interacts with VP3 (Potential). Interacts with VP2 (Potential). Interacts with NSP5; this interaction is probably necessary for the formation of functional virus factories.

The protein localises to the virion. It carries out the reaction RNA(n) + a ribonucleoside 5'-triphosphate = RNA(n+1) + diphosphate. Functionally, RNA-directed RNA polymerase that is involved in both transcription and genome replication. Together with VP3 capping enzyme, forms an enzyme complex positioned near the channels situated at each of the five-fold vertices of the core. Following infection, the outermost layer of the virus is lost, leaving a double-layered particle (DLP) made up of the core and VP6 shell. VP1 then catalyzes the transcription of fully conservative plus-strand genomic RNAs that are extruded through the DLP's channels into the cytoplasm where they function as mRNAs for translation of viral proteins. One copy of each of the viral (+)RNAs is also recruited during core assembly, together with newly synthesized polymerase complexes and VP2. The polymerase of these novo-formed particles catalyzes the synthesis of complementary minus-strands leading to dsDNA formation. To do so, the polymerase specifically recognizes conserved 3' sequence(s) in plus-strand RNA templates. Once dsRNA synthesis is complete, the polymerase switches to the transcriptional mode, thus providing secondary transcription. The chain is RNA-directed RNA polymerase from Rotavirus X (strain RVX/Human/China/NADRV-J19/1997/GXP[X]) (RV ADRV-N).